The following is a 90-amino-acid chain: Large ribosomal subunit protein eL31 (90 aa).

Belongs to the eukaryotic ribosomal protein eL31 family.

The chain is Large ribosomal subunit protein eL31 from Natronomonas pharaonis (strain ATCC 35678 / DSM 2160 / CIP 103997 / JCM 8858 / NBRC 14720 / NCIMB 2260 / Gabara) (Halobacterium pharaonis).